Consider the following 2542-residue polypeptide: Zinc finger FYVE domain-containing protein 26 (2542 aa).

2 disordered regions span residues 591 to 658 (HLPE…GPHT) and 740 to 811 (VTSN…QVEA). Ser-612 and Ser-616 each carry phosphoserine. Residues 752-772 (RRYRPTAKRHSSLRRGRRTRR) show a composition bias toward basic residues. Low complexity predominate over residues 785 to 803 (SLEGTSSELSTSTSEGSLS). Phosphoserine is present on Ser-798. Residues 866–891 (MFVERYQEVIQELARVEHKIENQNSD) are a coiled coil. Residues 1273 to 1292 (SPRPSENPSAERKSDSSPKD) are disordered. The segment covering 1281–1290 (SAERKSDSSP) has biased composition (basic and acidic residues). A coiled-coil region spans residues 1495 to 1522 (VSDMAVPEELKSELQRKLTELRVYQKIL). Phosphoserine occurs at positions 1739, 1761, 1783, and 1785. The tract at residues 1746 to 1807 (PVHQASDPET…LEFVPPETPP (62 aa)) is disordered. Over residues 1757-1779 (SRSSSAEFSAAAAAPAPAAPGSA) the composition is skewed to low complexity. The FYVE-type zinc finger occupies 1815–1875 (DETESMCMVC…VCDQCYSYYN (61 aa)). Residues Cys-1821, Cys-1824, Cys-1838, Cys-1841, Cys-1846, Cys-1849, Cys-1867, and Cys-1870 each coordinate Zn(2+).

Belongs to the ZFYVE26 family. As to quaternary structure, interacts with AP5Z1, AP5B1, AP5S1 and SPG11. Interacts with TTC19 and KIF13A.

The protein resides in the cytoplasm. It is found in the cytoskeleton. It localises to the microtubule organizing center. The protein localises to the centrosome. Its subcellular location is the midbody. Functionally, phosphatidylinositol 3-phosphate-binding protein required for the abscission step in cytokinesis: recruited to the midbody during cytokinesis and acts as a regulator of abscission. May also be required for efficient homologous recombination DNA double-strand break repair. This Rattus norvegicus (Rat) protein is Zinc finger FYVE domain-containing protein 26 (Zfyve26).